We begin with the raw amino-acid sequence, 364 residues long: tRNA 2-selenouridine synthase (364 aa).

Residues 14–137 (LIADTPIIDV…LRQTAIQATI (124 aa)) enclose the Rhodanese domain. C97 (S-selanylcysteine intermediate) is an active-site residue.

This sequence belongs to the SelU family. Monomer.

It catalyses the reaction 5-methylaminomethyl-2-thiouridine(34) in tRNA + selenophosphate + (2E)-geranyl diphosphate + H2O + H(+) = 5-methylaminomethyl-2-selenouridine(34) in tRNA + (2E)-thiogeraniol + phosphate + diphosphate. The enzyme catalyses 5-methylaminomethyl-2-thiouridine(34) in tRNA + (2E)-geranyl diphosphate = 5-methylaminomethyl-S-(2E)-geranyl-thiouridine(34) in tRNA + diphosphate. The catalysed reaction is 5-methylaminomethyl-S-(2E)-geranyl-thiouridine(34) in tRNA + selenophosphate + H(+) = 5-methylaminomethyl-2-(Se-phospho)selenouridine(34) in tRNA + (2E)-thiogeraniol. It carries out the reaction 5-methylaminomethyl-2-(Se-phospho)selenouridine(34) in tRNA + H2O = 5-methylaminomethyl-2-selenouridine(34) in tRNA + phosphate. Its function is as follows. Involved in the post-transcriptional modification of the uridine at the wobble position (U34) of tRNA(Lys), tRNA(Glu) and tRNA(Gln). Catalyzes the conversion of 2-thiouridine (S2U-RNA) to 2-selenouridine (Se2U-RNA). Acts in a two-step process involving geranylation of 2-thiouridine (S2U) to S-geranyl-2-thiouridine (geS2U) and subsequent selenation of the latter derivative to 2-selenouridine (Se2U) in the tRNA chain. This is tRNA 2-selenouridine synthase from Escherichia coli O157:H7.